Reading from the N-terminus, the 349-residue chain is tRNA pseudouridine synthase D (349 aa).

F27 lines the substrate pocket. D80 acts as the Nucleophile in catalysis. N129 provides a ligand contact to substrate. In terms of domain architecture, TRUD spans 155 to 303; sequence GVPNYFGAQR…VEAARRAMLL (149 aa). F329 lines the substrate pocket.

It belongs to the pseudouridine synthase TruD family.

It catalyses the reaction uridine(13) in tRNA = pseudouridine(13) in tRNA. Its function is as follows. Responsible for synthesis of pseudouridine from uracil-13 in transfer RNAs. This is tRNA pseudouridine synthase D from Shigella dysenteriae serotype 1 (strain Sd197).